The following is a 201-amino-acid chain: Lipopolysaccharide core heptose(II)-phosphate phosphatase (201 aa).

Positions 1–35 (MLAFTLRFIKNKRYLATLAGALVIIAGLTSQHAWS) are cleaved as a signal peptide.

Belongs to the phosphoglycerate mutase family. Ais subfamily.

It localises to the periplasm. The protein operates within bacterial outer membrane biogenesis; lipopolysaccharide metabolism. In terms of biological role, catalyzes the dephosphorylation of heptose(II) of the outer membrane lipopolysaccharide core. This Salmonella choleraesuis (strain SC-B67) protein is Lipopolysaccharide core heptose(II)-phosphate phosphatase.